Here is a 428-residue protein sequence, read N- to C-terminus: Enolase (428 aa).

Gln164 provides a ligand contact to (2R)-2-phosphoglycerate. Residue Glu206 is the Proton donor of the active site. The Mg(2+) site is built by Asp243, Glu286, and Asp313. (2R)-2-phosphoglycerate contacts are provided by Lys338, Arg367, Ser368, and Lys389. Lys338 serves as the catalytic Proton acceptor.

This sequence belongs to the enolase family. Requires Mg(2+) as cofactor.

The protein localises to the cytoplasm. The protein resides in the secreted. Its subcellular location is the cell surface. It catalyses the reaction (2R)-2-phosphoglycerate = phosphoenolpyruvate + H2O. It participates in carbohydrate degradation; glycolysis; pyruvate from D-glyceraldehyde 3-phosphate: step 4/5. In terms of biological role, catalyzes the reversible conversion of 2-phosphoglycerate (2-PG) into phosphoenolpyruvate (PEP). It is essential for the degradation of carbohydrates via glycolysis. The protein is Enolase of Dehalococcoides mccartyi (strain ATCC BAA-2266 / KCTC 15142 / 195) (Dehalococcoides ethenogenes (strain 195)).